The sequence spans 232 residues: Ubiquinone biosynthesis O-methyltransferase (232 aa).

Arginine 36, glycine 55, aspartate 76, and methionine 120 together coordinate S-adenosyl-L-methionine.

Belongs to the methyltransferase superfamily. UbiG/COQ3 family.

It carries out the reaction a 3-demethylubiquinol + S-adenosyl-L-methionine = a ubiquinol + S-adenosyl-L-homocysteine + H(+). The enzyme catalyses a 3-(all-trans-polyprenyl)benzene-1,2-diol + S-adenosyl-L-methionine = a 2-methoxy-6-(all-trans-polyprenyl)phenol + S-adenosyl-L-homocysteine + H(+). It functions in the pathway cofactor biosynthesis; ubiquinone biosynthesis. O-methyltransferase that catalyzes the 2 O-methylation steps in the ubiquinone biosynthetic pathway. This chain is Ubiquinone biosynthesis O-methyltransferase, found in Burkholderia multivorans (strain ATCC 17616 / 249).